The primary structure comprises 188 residues: Insulin-like peptide INSL6 (188 aa).

Positions 1 to 22 are cleaved as a signal peptide; it reads MKQLCCSCLLWLGLLLAPFSQE. Cystine bridges form between Cys33/Cys169, Cys45/Cys182, and Cys168/Cys173. A propeptide spans 53–158 (connecting peptide); the sequence is FSMEEQSPMT…SGLFWGNHPQ (106 aa).

This sequence belongs to the insulin family. Testis and prostate specific.

The protein localises to the secreted. Functionally, may have a role in sperm development and fertilization. The sequence is that of Insulin-like peptide INSL6 (Insl6) from Rattus norvegicus (Rat).